The primary structure comprises 867 residues: Alanine--tRNA ligase (867 aa).

The Zn(2+) site is built by His555, His559, Cys657, and His661.

It belongs to the class-II aminoacyl-tRNA synthetase family. It depends on Zn(2+) as a cofactor.

The protein localises to the cytoplasm. The enzyme catalyses tRNA(Ala) + L-alanine + ATP = L-alanyl-tRNA(Ala) + AMP + diphosphate. Catalyzes the attachment of alanine to tRNA(Ala) in a two-step reaction: alanine is first activated by ATP to form Ala-AMP and then transferred to the acceptor end of tRNA(Ala). Also edits incorrectly charged Ser-tRNA(Ala) and Gly-tRNA(Ala) via its editing domain. The chain is Alanine--tRNA ligase from Psychromonas ingrahamii (strain DSM 17664 / CCUG 51855 / 37).